The primary structure comprises 123 residues: Small ribosomal subunit protein uS12 (123 aa).

Residues 1 to 32 (MPTIQQLVRKGRKTKVSKNKTPALKGSPQRRG) form a disordered region. Positions 9–18 (RKGRKTKVSK) are enriched in basic residues. A 3-methylthioaspartic acid modification is found at Asp89.

This sequence belongs to the universal ribosomal protein uS12 family. As to quaternary structure, part of the 30S ribosomal subunit. Contacts proteins S8 and S17. May interact with IF1 in the 30S initiation complex.

In terms of biological role, with S4 and S5 plays an important role in translational accuracy. Interacts with and stabilizes bases of the 16S rRNA that are involved in tRNA selection in the A site and with the mRNA backbone. Located at the interface of the 30S and 50S subunits, it traverses the body of the 30S subunit contacting proteins on the other side and probably holding the rRNA structure together. The combined cluster of proteins S8, S12 and S17 appears to hold together the shoulder and platform of the 30S subunit. The protein is Small ribosomal subunit protein uS12 of Thermobifida fusca (strain YX).